A 127-amino-acid chain; its full sequence is Glycine cleavage system H protein (127 aa).

Positions 27-109 (TVRVGITHIA…YGEGWLYEVK (83 aa)) constitute a Lipoyl-binding domain. Lys68 is subject to N6-lipoyllysine.

This sequence belongs to the GcvH family. The glycine cleavage system is composed of four proteins: P, T, L and H. Requires (R)-lipoate as cofactor.

Its function is as follows. The glycine cleavage system catalyzes the degradation of glycine. The H protein shuttles the methylamine group of glycine from the P protein to the T protein. In Corynebacterium jeikeium (strain K411), this protein is Glycine cleavage system H protein.